Reading from the N-terminus, the 248-residue chain is MKSILNDFLLMIQFFTRIPINKNLQCEKANFRRGAFFLPVVASIIGGMEFLIYLGLKNFLPSNVIIVLLLLFTAMITGGLHMDGLADTCDGFFSLRDKERIIEIMKDSRIGSYGTIALIIDLLLKYQLLYSLVLKGYSIAIFLAPIIGRISILFLCLSKRTAKKNGSGNIFIGNMSKPIVFFISTIVLVLSTYFLGLRATIIPFIGALLITYLLYLLCLNKINGLTGDTLGACNELGEITFLLILLMM.

Helical transmembrane passes span 36 to 56, 59 to 79, 114 to 134, 137 to 157, 170 to 190, and 199 to 219; these read FFLPVVASIIGGMEFLIYLGL, FLPSNVIIVLLLLFTAMITGG, GTIALIIDLLLKYQLLYSLVL, YSIAIFLAPIIGRISILFLCL, IFIGNMSKPIVFFISTIVLVL, and ATIIPFIGALLITYLLYLLCL.

The protein belongs to the CobS family. Mg(2+) serves as cofactor.

The protein localises to the cell membrane. The enzyme catalyses alpha-ribazole + adenosylcob(III)inamide-GDP = adenosylcob(III)alamin + GMP + H(+). It carries out the reaction alpha-ribazole 5'-phosphate + adenosylcob(III)inamide-GDP = adenosylcob(III)alamin 5'-phosphate + GMP + H(+). Its pathway is cofactor biosynthesis; adenosylcobalamin biosynthesis; adenosylcobalamin from cob(II)yrinate a,c-diamide: step 7/7. In terms of biological role, joins adenosylcobinamide-GDP and alpha-ribazole to generate adenosylcobalamin (Ado-cobalamin). Also synthesizes adenosylcobalamin 5'-phosphate from adenosylcobinamide-GDP and alpha-ribazole 5'-phosphate. The sequence is that of Adenosylcobinamide-GDP ribazoletransferase from Clostridium botulinum (strain Loch Maree / Type A3).